The following is a 341-amino-acid chain: Anthranilate phosphoribosyltransferase (341 aa).

5-phospho-alpha-D-ribose 1-diphosphate contacts are provided by residues G80, 83–84 (GD), T88, 90–93 (NIST), 108–116 (KHGNYSVSS), and S120. G80 is an anthranilate binding site. Residue S92 participates in Mg(2+) binding. N111 contacts anthranilate. R166 lines the anthranilate pocket. Positions 224 and 225 each coordinate Mg(2+).

Belongs to the anthranilate phosphoribosyltransferase family. Homodimer. Mg(2+) is required as a cofactor.

It catalyses the reaction N-(5-phospho-beta-D-ribosyl)anthranilate + diphosphate = 5-phospho-alpha-D-ribose 1-diphosphate + anthranilate. It participates in amino-acid biosynthesis; L-tryptophan biosynthesis; L-tryptophan from chorismate: step 2/5. Catalyzes the transfer of the phosphoribosyl group of 5-phosphorylribose-1-pyrophosphate (PRPP) to anthranilate to yield N-(5'-phosphoribosyl)-anthranilate (PRA). This Haloquadratum walsbyi (strain DSM 16790 / HBSQ001) protein is Anthranilate phosphoribosyltransferase.